A 250-amino-acid polypeptide reads, in one-letter code: NH(3)-dependent NAD(+) synthetase (250 aa).

31-38 (GISGGIDS) contacts ATP. Asp-37 is a binding site for Mg(2+). Arg-122 is a deamido-NAD(+) binding site. Residue Thr-142 participates in ATP binding. Glu-147 is a Mg(2+) binding site. The deamido-NAD(+) site is built by Lys-155 and Asp-162. ATP contacts are provided by Lys-171 and Ser-193. 239–240 (HK) contributes to the deamido-NAD(+) binding site.

Belongs to the NAD synthetase family. Homodimer.

The catalysed reaction is deamido-NAD(+) + NH4(+) + ATP = AMP + diphosphate + NAD(+) + H(+). It functions in the pathway cofactor biosynthesis; NAD(+) biosynthesis; NAD(+) from deamido-NAD(+) (ammonia route): step 1/1. Catalyzes the ATP-dependent amidation of deamido-NAD to form NAD. Uses ammonia as a nitrogen source. This is NH(3)-dependent NAD(+) synthetase from Alkaliphilus oremlandii (strain OhILAs) (Clostridium oremlandii (strain OhILAs)).